The sequence spans 190 residues: Elongation factor P (190 aa).

Position 34 is an N6-(3,6-diaminohexanoyl)-5-hydroxylysine (Lys-34).

It belongs to the elongation factor P family. Post-translationally, may be beta-lysylated on the epsilon-amino group of Lys-34 by the combined action of EpmA and EpmB, and then hydroxylated on the C5 position of the same residue by EpmC (if this protein is present). Lysylation is critical for the stimulatory effect of EF-P on peptide-bond formation. The lysylation moiety may extend toward the peptidyltransferase center and stabilize the terminal 3-CCA end of the tRNA. Hydroxylation of the C5 position on Lys-34 may allow additional potential stabilizing hydrogen-bond interactions with the P-tRNA.

Its subcellular location is the cytoplasm. Its pathway is protein biosynthesis; polypeptide chain elongation. Functionally, involved in peptide bond synthesis. Alleviates ribosome stalling that occurs when 3 or more consecutive Pro residues or the sequence PPG is present in a protein, possibly by augmenting the peptidyl transferase activity of the ribosome. Modification of Lys-34 is required for alleviation. The protein is Elongation factor P of Psychrobacter cryohalolentis (strain ATCC BAA-1226 / DSM 17306 / VKM B-2378 / K5).